A 177-amino-acid chain; its full sequence is Large ribosomal subunit protein uL6 (177 aa).

This sequence belongs to the universal ribosomal protein uL6 family. As to quaternary structure, part of the 50S ribosomal subunit.

Its function is as follows. This protein binds to the 23S rRNA, and is important in its secondary structure. It is located near the subunit interface in the base of the L7/L12 stalk, and near the tRNA binding site of the peptidyltransferase center. In Vibrio campbellii (strain ATCC BAA-1116), this protein is Large ribosomal subunit protein uL6.